We begin with the raw amino-acid sequence, 301 residues long: Protoheme IX farnesyltransferase (301 aa).

Helical transmembrane passes span 20-42 (FTEL…GMWL), 55-75 (VDVI…SGAF), 105-125 (ALMV…MTTW), 126-146 (QAGV…SLYA), 150-172 (LVSN…WFAV), 176-198 (FSIV…FYAI), 227-247 (MFFW…LGIV), 249-269 (VVLA…GFKM), and 280-300 (FVYS…ISIF).

It belongs to the UbiA prenyltransferase family. Protoheme IX farnesyltransferase subfamily. As to quaternary structure, interacts with CtaA.

Its subcellular location is the cell membrane. It catalyses the reaction heme b + (2E,6E)-farnesyl diphosphate + H2O = Fe(II)-heme o + diphosphate. Its pathway is porphyrin-containing compound metabolism; heme O biosynthesis; heme O from protoheme: step 1/1. Functionally, converts heme B (protoheme IX) to heme O by substitution of the vinyl group on carbon 2 of heme B porphyrin ring with a hydroxyethyl farnesyl side group. This chain is Protoheme IX farnesyltransferase, found in Listeria monocytogenes serotype 4b (strain CLIP80459).